We begin with the raw amino-acid sequence, 179 residues long: Large ribosomal subunit protein uL5 (179 aa).

Belongs to the universal ribosomal protein uL5 family. In terms of assembly, part of the 50S ribosomal subunit; part of the 5S rRNA/L5/L18/L25 subcomplex. Contacts the 5S rRNA and the P site tRNA. Forms a bridge to the 30S subunit in the 70S ribosome.

Functionally, this is one of the proteins that bind and probably mediate the attachment of the 5S RNA into the large ribosomal subunit, where it forms part of the central protuberance. In the 70S ribosome it contacts protein S13 of the 30S subunit (bridge B1b), connecting the 2 subunits; this bridge is implicated in subunit movement. Contacts the P site tRNA; the 5S rRNA and some of its associated proteins might help stabilize positioning of ribosome-bound tRNAs. This chain is Large ribosomal subunit protein uL5, found in Anoxybacillus flavithermus (strain DSM 21510 / WK1).